We begin with the raw amino-acid sequence, 109 residues long: Arminin 6560 (109 aa).

Positions 1–21 (MKCLFGFLFIMLVAFLQDVHG) are cleaved as a signal peptide. Residues 22-77 (VDSCIGKPCKVKGEDMKDIKEKKIEDIKEEIKNVKKEIFEDVDDELLDDNIRDDKI) constitute a propeptide that is removed on maturation. Isoleucine 106 carries the isoleucine amide modification.

Belongs to the arminin family. Expressed in the ectodermal epithelium.

The protein localises to the secreted. It is found in the target cell membrane. In terms of biological role, antimicrobial peptide with a broad-spectrum antimicrobial activity. Keeps its antibacterial activity under a wide range of salt concentrations that mimic physiological conditions of human blood, which is surprising, since Hydra is an obligate freshwater animal with nearly no salt tolerance. Does not affect red blood cells. In Hydra vulgaris (Hydra), this protein is Arminin 6560.